Reading from the N-terminus, the 236-residue chain is Large ribosomal subunit protein uL2 (236 aa).

Residues 198-236 form a disordered region; it reads DHPFGGGGRQHPGRPKTVSRGTPPGRKVGSIAARRTGKR.

It belongs to the universal ribosomal protein uL2 family. As to quaternary structure, part of the 50S ribosomal subunit. Forms a bridge to the 30S subunit in the 70S ribosome.

Functionally, one of the primary rRNA binding proteins. Required for association of the 30S and 50S subunits to form the 70S ribosome, for tRNA binding and peptide bond formation. It has been suggested to have peptidyltransferase activity; this is somewhat controversial. Makes several contacts with the 16S rRNA in the 70S ribosome. In Methanothrix thermoacetophila (strain DSM 6194 / JCM 14653 / NBRC 101360 / PT) (Methanosaeta thermophila), this protein is Large ribosomal subunit protein uL2.